A 712-amino-acid polypeptide reads, in one-letter code: Polyribonucleotide nucleotidyltransferase (712 aa).

Mg(2+) contacts are provided by aspartate 487 and aspartate 493. One can recognise a KH domain in the interval 554-613 (PKILTMQINPEKIREVIGPSGKQINKIIDETGVKIDIEQDGTIFISSVNEAMNQKAKQII). The S1 motif domain occupies 623-691 (GQIYLGKVKR…KQGRVNLSRK (69 aa)).

The protein belongs to the polyribonucleotide nucleotidyltransferase family. Mg(2+) is required as a cofactor.

The protein resides in the cytoplasm. The catalysed reaction is RNA(n+1) + phosphate = RNA(n) + a ribonucleoside 5'-diphosphate. In terms of biological role, involved in mRNA degradation. Catalyzes the phosphorolysis of single-stranded polyribonucleotides processively in the 3'- to 5'-direction. The protein is Polyribonucleotide nucleotidyltransferase of Geobacillus sp. (strain WCH70).